We begin with the raw amino-acid sequence, 200 residues long: Neutrophil gelatinase-associated lipocalin (200 aa).

The N-terminal stretch at 1–20 (MALSVMCLGLALLGVLQSQA) is a signal peptide. The residue at position 21 (Gln-21) is a Pyrrolidone carboxylic acid. Position 72 to 74 (72 to 74 (YST)) interacts with a carboxymycobactin. N-linked (GlcNAc...) asparagine glycosylation is found at Asn-81 and Asn-85. Cys-98 and Cys-197 are oxidised to a cystine. Tyr-128 serves as a coordination point for enterobactin. The a carboxymycobactin site is built by Lys-147, Lys-156, and Tyr-160. An enterobactin-binding site is contributed by Lys-156.

This sequence belongs to the calycin superfamily. Lipocalin family. As to quaternary structure, monomer. Homodimer; disulfide-linked. Heterodimer; disulfide-linked with MMP9. Post-translationally, N-glycosylated. Expressed in the cortical tubules of the kidney (at protein level). Also expressed in the medullary tubules of the kidney. Detected in lung, spleen, uterus, vagina and epididymis.

The protein localises to the secreted. The protein resides in the cytoplasmic granule lumen. It localises to the cytoplasmic vesicle lumen. Iron-trafficking protein involved in multiple processes such as apoptosis, innate immunity and renal development. Binds iron through association with 2,3-dihydroxybenzoic acid (2,3-DHBA), a siderophore that shares structural similarities with bacterial enterobactin, and delivers or removes iron from the cell, depending on the context. Iron-bound form (holo-24p3) is internalized following binding to the SLC22A17 (24p3R) receptor, leading to release of iron and subsequent increase of intracellular iron concentration. In contrast, association of the iron-free form (apo-24p3) with the SLC22A17 (24p3R) receptor is followed by association with an intracellular siderophore, iron chelation and iron transfer to the extracellular medium, thereby reducing intracellular iron concentration. Involved in apoptosis due to interleukin-3 (IL3) deprivation: iron-loaded form increases intracellular iron concentration without promoting apoptosis, while iron-free form decreases intracellular iron levels, inducing expression of the proapoptotic protein BCL2L11/BIM, resulting in apoptosis. Involved in innate immunity; limits bacterial proliferation by sequestering iron bound to microbial siderophores, such as enterobactin. Can also bind siderophores from M.tuberculosis. The sequence is that of Neutrophil gelatinase-associated lipocalin (Lcn2) from Mus musculus (Mouse).